The following is a 156-amino-acid chain: MQVQNIEGTLTAQGIRFGLVVSRFNDFIGQKLVEGAIDCIVRHGGSADNITVIRCPGAFELPSVTRKAAMSGKFDAMITLGVIIRGSTPHFDVIAAEATKGIAQVGLETMIPITFGVLTTENLEQAIERAGTKAGNKGFDAALGAIEMVNLYKQLG.

Residues Phe24, 58–60 (AFE), and 82–84 (VII) each bind 5-amino-6-(D-ribitylamino)uracil. 87–88 (ST) is a (2S)-2-hydroxy-3-oxobutyl phosphate binding site. His90 acts as the Proton donor in catalysis. Residue Phe115 participates in 5-amino-6-(D-ribitylamino)uracil binding. Arg129 provides a ligand contact to (2S)-2-hydroxy-3-oxobutyl phosphate.

The protein belongs to the DMRL synthase family.

It carries out the reaction (2S)-2-hydroxy-3-oxobutyl phosphate + 5-amino-6-(D-ribitylamino)uracil = 6,7-dimethyl-8-(1-D-ribityl)lumazine + phosphate + 2 H2O + H(+). It functions in the pathway cofactor biosynthesis; riboflavin biosynthesis; riboflavin from 2-hydroxy-3-oxobutyl phosphate and 5-amino-6-(D-ribitylamino)uracil: step 1/2. In terms of biological role, catalyzes the formation of 6,7-dimethyl-8-ribityllumazine by condensation of 5-amino-6-(D-ribitylamino)uracil with 3,4-dihydroxy-2-butanone 4-phosphate. This is the penultimate step in the biosynthesis of riboflavin. The chain is 6,7-dimethyl-8-ribityllumazine synthase from Chlorobaculum parvum (strain DSM 263 / NCIMB 8327) (Chlorobium vibrioforme subsp. thiosulfatophilum).